A 623-amino-acid polypeptide reads, in one-letter code: Kelch repeat and BTB domain-containing protein 12 (623 aa).

The region spanning 31–98 is the BTB domain; it reads IDVVLTAEGE…MYNAALEINN (68 aa). One can recognise a BACK domain in the interval 133–235; sequence CLGIYYFAKQ…NPSFLRQALR (103 aa). Kelch repeat units lie at residues 386–436, 437–492, 494–547, and 553–603; these read DLYV…TVNN, KLYV…VVNS, IYVL…STNA, and KLYV…LVAR.

The chain is Kelch repeat and BTB domain-containing protein 12 (KBTBD12) from Homo sapiens (Human).